The following is a 163-amino-acid chain: Lysosomal enzyme trafficking factor (163 aa).

2 consecutive transmembrane segments (helical) span residues 40–60 (MGWI…YYVF) and 98–118 (LPFW…FLFL).

The protein belongs to the LYSET family. As to quaternary structure, interacts with GNPTAB; this interaction is important for proper localization of GNPTAB in Golgi stacks. Interacts with MBTPS1.

It is found in the golgi apparatus membrane. In terms of biological role, required for mannose-6-phosphate-dependent trafficking of lysosomal enzymes. LYSET bridges GlcNAc-1-phosphate transferase (GNPTAB), to the membrane-bound transcription factor site-1 protease (MBTPS1), thus allowing proteolytic activation of the GNPTAB. GNPTAB is involved in the regulation of M6P-dependent Golgi-to-lysosome trafficking of lysosomal enzymes. LYSET is thus an essential factor for maturation and delivery of lysosomal hydrolases. Plays an essential function for cells that depend on lysosomal catabolism to generate nutrients. The sequence is that of Lysosomal enzyme trafficking factor (Lyset) from Mus musculus (Mouse).